Here is a 310-residue protein sequence, read N- to C-terminus: tRNA dimethylallyltransferase (310 aa).

13–20 contributes to the ATP binding site; sequence GPTASGKT. 15-20 provides a ligand contact to substrate; sequence TASGKT. 4 interaction with substrate tRNA regions span residues 38 to 41, 162 to 166, 243 to 248, and 276 to 283; these read DSAL, QRLSR, RCVGYR, and KRQITWLR.

Belongs to the IPP transferase family. As to quaternary structure, monomer. Mg(2+) serves as cofactor.

It carries out the reaction adenosine(37) in tRNA + dimethylallyl diphosphate = N(6)-dimethylallyladenosine(37) in tRNA + diphosphate. Catalyzes the transfer of a dimethylallyl group onto the adenine at position 37 in tRNAs that read codons beginning with uridine, leading to the formation of N6-(dimethylallyl)adenosine (i(6)A). This chain is tRNA dimethylallyltransferase, found in Vibrio parahaemolyticus serotype O3:K6 (strain RIMD 2210633).